The chain runs to 1873 residues: Ankyrin repeat domain-containing protein 31 (1873 aa).

Disordered regions lie at residues 1 to 27 and 361 to 380; these read MEEGVQAPDWDSDETVIEGSVTESDLE and EPLSNKRNSNSVTNSSDQET. Positions 361–379 are enriched in polar residues; it reads EPLSNKRNSNSVTNSSDQE. 3 ANK repeats span residues 488-517, 521-550, and 554-583; these read FGENLVYKAALHDDADLVHHCIKKGGNVNQ, AGWTALHEASVGGFYRTASELLKGGADVNI, and YQITPLHDAVMNGHYKVAELLLLNGADPLF. Residues 707–740 form a disordered region; it reads TGLRKGNLHNVKDPNTNVPKGIGRRKTQHKRTQV. Residues 728-737 are compositionally biased toward basic residues; the sequence is IGRRKTQHKR. 3 ANK repeats span residues 1154–1183, 1187–1216, and 1220–1249; these read RGESQLHLAVRRGNLPLVKALIESGADVNL, AGWTPLHEASNEGSIDIIVELLKAGAKVNC, and DGILPLHDAVANNHLKAAEILLQNGANPNQ. Disordered regions lie at residues 1242–1263, 1449–1482, 1512–1549, and 1606–1634; these read QNGANPNQKDQKQKSALDEADD, RSEISSEKDSQELTSLENLEHPQSGSLSPVSGSM, FSGNDMNSKQNGSDCTLDGFPKSRHSDGTEKNKLPSQP, and CDQDLSNYDPKRGNRKTSSQQSPTGASES. The segment covering 1250–1263 has biased composition (basic and acidic residues); the sequence is KDQKQKSALDEADD. Composition is skewed to polar residues over residues 1460–1482 and 1515–1525; these read ELTSLENLEHPQSGSLSPVSGSM and NDMNSKQNGSD. Positions 1535-1544 are enriched in basic and acidic residues; that stretch reads RHSDGTEKNK. Polar residues predominate over residues 1621–1632; it reads KTSSQQSPTGAS. Positions 1683–1778 constitute an RAMA domain; the sequence is KKALNYSTAP…TYLGKELLRY (96 aa).

Interacts with REC114; the interaction is direct. Interacts with IHO1.

The protein localises to the nucleus. It localises to the chromosome. Functionally, required for DNA double-strand breaks (DSBs) formation during meiotic recombination. Regulates the spatial and temporal patterns of pre-DSB recombinosome assembly and recombination activity by acting as a scaffold that anchors REC114 and other factors to specific genomic locations, thereby regulating DSB formation. Plays a key role in recombination in the pseudoautosomal regions of sex chromosomes. The sequence is that of Ankyrin repeat domain-containing protein 31 from Homo sapiens (Human).